Consider the following 83-residue polypeptide: Cyclin-dependent kinases regulatory subunit 2 (83 aa).

The protein belongs to the CKS family. Interacts with CDKA-1, CYCD2-1 and AT4G14310.

In terms of biological role, binds to the catalytic subunit of the cyclin dependent kinases and is essential for their biological function. The protein is Cyclin-dependent kinases regulatory subunit 2 (CKS2) of Arabidopsis thaliana (Mouse-ear cress).